We begin with the raw amino-acid sequence, 564 residues long: Cysteine--tRNA ligase CPS1, chloroplastic/mitochondrial (564 aa).

The transit peptide at 1 to 43 (MAAAVVVRRAAGLIPLLSSRFGARMPLHRALSQIPPPRFCRLL) directs the protein to the chloroplast and mitochondrion. Cys-93 is a binding site for Zn(2+). The short motif at 95–105 (VTPYDDSHIGH) is the 'HIGH' region element. Cys-273, His-298, and Glu-302 together coordinate Zn(2+). The 'KMSKS' region signature appears at 330–334 (KMSKS). Lys-333 is a binding site for ATP.

It belongs to the class-I aminoacyl-tRNA synthetase family. It depends on Zn(2+) as a cofactor.

Its subcellular location is the plastid. The protein localises to the chloroplast. It localises to the mitochondrion. It catalyses the reaction tRNA(Cys) + L-cysteine + ATP = L-cysteinyl-tRNA(Cys) + AMP + diphosphate. Nuclear genome-encoded factor required for normal assembly of chloroplast polysomes. The sequence is that of Cysteine--tRNA ligase CPS1, chloroplastic/mitochondrial from Zea mays (Maize).